A 140-amino-acid polypeptide reads, in one-letter code: Large ribosomal subunit protein uL14 (140 aa).

Ser17 carries the post-translational modification Phosphoserine. Position 38 is a phosphotyrosine (Tyr38).

This sequence belongs to the universal ribosomal protein uL14 family. As to quaternary structure, component of the large ribosomal subunit.

Its subcellular location is the cytoplasm. Functionally, component of the large ribosomal subunit. The ribosome is a large ribonucleoprotein complex responsible for the synthesis of proteins in the cell. The chain is Large ribosomal subunit protein uL14 (RPL23) from Canis lupus familiaris (Dog).